Reading from the N-terminus, the 333-residue chain is MAELFYDDDADLSIIQGRKVAVLGYGSQGHAHALSLRDSGVDVRVGLHEGSKSKAKAEEQGLRVVTPSEAAAEADVIMILVPDPIQAQVYEESVKDNLKDGDALFFGHGLNIRFGFIKPPAGVDVCMVAPKGPGHLVRRQYEEGRGVPCIVAVEQDASGKGLELALSYAKGIGGTRAGVIKTTFTEETETDLFGEQAVLCGGTAALVKAGFETLTEAGYQPEIAYFECLHELKLIVDLMYEGGLEKMRWSISETAEWGDYVTGPRIITDATKAEMKKVLAEIQDGTFAKNWMAEYHNGLPKYNEYKKADSDHLLETTGRELRKLMSWVNDEEA.

Residues 2-182 form the KARI N-terminal Rossmann domain; that stretch reads AELFYDDDAD…GGTRAGVIKT (181 aa). NADP(+) is bound by residues 25-28, serine 51, serine 53, and 83-86; these read YGSQ and DPIQ. The active site involves histidine 108. Glycine 134 contributes to the NADP(+) binding site. One can recognise a KARI C-terminal knotted domain in the interval 183-328; sequence TFTEETETDL…RELRKLMSWV (146 aa). Residues aspartate 191, glutamate 195, glutamate 227, and glutamate 231 each contribute to the Mg(2+) site. Serine 252 lines the substrate pocket.

The protein belongs to the ketol-acid reductoisomerase family. Mg(2+) serves as cofactor.

It catalyses the reaction (2R)-2,3-dihydroxy-3-methylbutanoate + NADP(+) = (2S)-2-acetolactate + NADPH + H(+). The catalysed reaction is (2R,3R)-2,3-dihydroxy-3-methylpentanoate + NADP(+) = (S)-2-ethyl-2-hydroxy-3-oxobutanoate + NADPH + H(+). Its pathway is amino-acid biosynthesis; L-isoleucine biosynthesis; L-isoleucine from 2-oxobutanoate: step 2/4. It functions in the pathway amino-acid biosynthesis; L-valine biosynthesis; L-valine from pyruvate: step 2/4. Its function is as follows. Involved in the biosynthesis of branched-chain amino acids (BCAA). Catalyzes an alkyl-migration followed by a ketol-acid reduction of (S)-2-acetolactate (S2AL) to yield (R)-2,3-dihydroxy-isovalerate. In the isomerase reaction, S2AL is rearranged via a Mg-dependent methyl migration to produce 3-hydroxy-3-methyl-2-ketobutyrate (HMKB). In the reductase reaction, this 2-ketoacid undergoes a metal-dependent reduction by NADPH to yield (R)-2,3-dihydroxy-isovalerate. This is Ketol-acid reductoisomerase (NADP(+)) from Streptomyces griseus subsp. griseus (strain JCM 4626 / CBS 651.72 / NBRC 13350 / KCC S-0626 / ISP 5235).